Here is a 192-residue protein sequence, read N- to C-terminus: Chromophore lyase CpcS/CpeS 2 (192 aa).

The protein belongs to the CpcS/CpeS biliprotein lyase family.

Functionally, covalently attaches a chromophore to Cys residue(s) of phycobiliproteins. This chain is Chromophore lyase CpcS/CpeS 2, found in Synechocystis sp. (strain ATCC 27184 / PCC 6803 / Kazusa).